We begin with the raw amino-acid sequence, 393 residues long: NAD(P)H-quinone oxidoreductase subunit H, chloroplastic (393 aa).

Belongs to the complex I 49 kDa subunit family. As to quaternary structure, NDH is composed of at least 16 different subunits, 5 of which are encoded in the nucleus.

It is found in the plastid. It localises to the chloroplast thylakoid membrane. It carries out the reaction a plastoquinone + NADH + (n+1) H(+)(in) = a plastoquinol + NAD(+) + n H(+)(out). It catalyses the reaction a plastoquinone + NADPH + (n+1) H(+)(in) = a plastoquinol + NADP(+) + n H(+)(out). In terms of biological role, NDH shuttles electrons from NAD(P)H:plastoquinone, via FMN and iron-sulfur (Fe-S) centers, to quinones in the photosynthetic chain and possibly in a chloroplast respiratory chain. The immediate electron acceptor for the enzyme in this species is believed to be plastoquinone. Couples the redox reaction to proton translocation, and thus conserves the redox energy in a proton gradient. The chain is NAD(P)H-quinone oxidoreductase subunit H, chloroplastic from Gossypium hirsutum (Upland cotton).